The sequence spans 172 residues: Shikimate kinase (172 aa).

11–16 is an ATP binding site; it reads GAGKST. Residue Ser15 participates in Mg(2+) binding. Asp33, Arg57, and Gly79 together coordinate substrate. Arg117 provides a ligand contact to ATP. Arg136 provides a ligand contact to substrate. ATP is bound at residue Arg153.

The protein belongs to the shikimate kinase family. As to quaternary structure, monomer. Mg(2+) is required as a cofactor.

It localises to the cytoplasm. It catalyses the reaction shikimate + ATP = 3-phosphoshikimate + ADP + H(+). Its pathway is metabolic intermediate biosynthesis; chorismate biosynthesis; chorismate from D-erythrose 4-phosphate and phosphoenolpyruvate: step 5/7. In terms of biological role, catalyzes the specific phosphorylation of the 3-hydroxyl group of shikimic acid using ATP as a cosubstrate. The protein is Shikimate kinase of Pseudomonas aeruginosa (strain LESB58).